Here is a 3061-residue protein sequence, read N- to C-terminus: Genome polyprotein (3061 aa).

The Peptidase S30 domain occupies 141-284 (KLTEGQMNHL…QGVMDSMVQF (144 aa)). Catalysis depends on for P1 proteinase activity residues His192, Asp201, and Ser235. The Involved in interaction with stylet and aphid transmission signature appears at 334-337 (KITC). The Involved in virions binding and aphid transmission signature appears at 592 to 594 (PTK). Residues 618 to 740 (LYIARQGFCY…ESDIKHYRVG (123 aa)) enclose the Peptidase C6 domain. Catalysis depends on for helper component proteinase activity residues Cys626 and His699. Residues 1229–1381 (DIAHSEHLDF…TQQPVKLIVE (153 aa)) enclose the Helicase ATP-binding domain. 1242 to 1249 (GAVGSGKS) contacts ATP. The short motif at 1331 to 1334 (DECH) is the DECH box element. The region spanning 1400 to 1559 (DVVQFGSNVL…NLPVMTGGVS (160 aa)) is the Helicase C-terminal domain. Residues 1884-1892 (RKKGKGKGT) carry the Nuclear localization signal motif. At Tyr1907 the chain carries O-(5'-phospho-RNA)-tyrosine. A Peptidase C4 domain is found at 2032–2250 (AKSLMRGLRD…VLWGPLKLKE (219 aa)). Residues His2077, Asp2112, and Cys2182 each act as for nuclear inclusion protein A activity in the active site. Residues 2517–2641 (WVYCDADGSQ…AVNPEKESIL (125 aa)) form the RdRp catalytic domain. Residues 2795-2835 (GNDTIDAGGSTKKDAKQEQGSIQPNLNKEKEKDVNVGTSGT) form a disordered region. Thr3044 carries the post-translational modification Phosphothreonine.

The protein belongs to the potyviridae genome polyprotein family. As to quaternary structure, interacts with host eIF4E protein (via cap-binding region); this interaction mediates the translation of the VPg-viral RNA conjugates. Part of a complex that comprises VPg, RNA, host EIF4E and EIF4G; this interaction mediates the translation of the VPg-viral RNA conjugates. VPg is uridylylated by the polymerase and is covalently attached to the 5'-end of the genomic RNA. This uridylylated form acts as a nucleotide-peptide primer for the polymerase. Post-translationally, potyviral RNA is expressed as two polyproteins which undergo post-translational proteolytic processing. Genome polyprotein is processed by NIa-pro, P1 and HC-pro proteinases resulting in the production of at least ten individual proteins. P3N-PIPO polyprotein is cleaved by P1 and HC-pro proteinases resulting in the production of three individual proteins. The P1 proteinase and the HC-pro cleave only their respective C-termini autocatalytically. 6K1 is essential for proper proteolytic separation of P3 from CI.

It localises to the host cytoplasmic vesicle. The protein localises to the host nucleus. It is found in the virion. The catalysed reaction is RNA(n) + a ribonucleoside 5'-triphosphate = RNA(n+1) + diphosphate. The enzyme catalyses Hydrolyzes glutaminyl bonds, and activity is further restricted by preferences for the amino acids in P6 - P1' that vary with the species of potyvirus, e.g. Glu-Xaa-Xaa-Tyr-Xaa-Gln-|-(Ser or Gly) for the enzyme from tobacco etch virus. The natural substrate is the viral polyprotein, but other proteins and oligopeptides containing the appropriate consensus sequence are also cleaved.. It catalyses the reaction Hydrolyzes a Gly-|-Gly bond at its own C-terminus, commonly in the sequence -Tyr-Xaa-Val-Gly-|-Gly, in the processing of the potyviral polyprotein.. In terms of biological role, required for aphid transmission and also has proteolytic activity. Only cleaves a Gly-Gly dipeptide at its own C-terminus. Interacts with virions and aphid stylets. Acts as a suppressor of RNA-mediated gene silencing, also known as post-transcriptional gene silencing (PTGS), a mechanism of plant viral defense that limits the accumulation of viral RNAs. May have RNA-binding activity. Functionally, has helicase activity. It may be involved in replication. Indispensable for virus replication. Reduces the abundance of host transcripts related to jasmonic acid biosynthesis therefore altering the host defenses. In order to increase its own stability, decreases host protein degradation pathways. Its function is as follows. Indispensable for virus replication. In terms of biological role, mediates the cap-independent, EIF4E-dependent translation of viral genomic RNAs. Binds to the cap-binding site of host EIF4E and thus interferes with the host EIF4E-dependent mRNA export and translation. VPg-RNA directly binds EIF4E and is a template for transcription. Also forms trimeric complexes with EIF4E-EIF4G, which are templates for translation. Functionally, has RNA-binding and proteolytic activities. An RNA-dependent RNA polymerase that plays an essential role in the virus replication. Its function is as follows. Involved in aphid transmission, cell-to-cell and systemis movement, encapsidation of the viral RNA and in the regulation of viral RNA amplification. This chain is Genome polyprotein, found in Potato virus Y (strain Hungarian) (PVY).